Here is a 176-residue protein sequence, read N- to C-terminus: Magnetosome protein MamT (176 aa).

The Cytoplasmic portion of the chain corresponds to 1–11 (MSMEAPRRGRR). The chain crosses the membrane as a helical span at residues 12–30 (WVSLGMIALLAAIGLGLYW). Residues 31–176 (DQLSTPSGIT…DKKGGMRWQL (146 aa)) are Lumenal-facing. The MCR (magnetochrome) 1 signature appears at 89-109 (VKPGTGMPHPYVGDCIQCHLM). Cysteine 103, cysteine 106, histidine 107, cysteine 154, cysteine 157, and histidine 158 together coordinate heme. An MCR 2 motif is present at residues 140 to 160 (ILPTSRQPHPPAGRCIKCHDI).

The protein belongs to the magnetosome MamT family. Heme serves as cofactor.

The protein localises to the magnetosome membrane. Functionally, may play a role in magnetite crystal maturation. May transfer electrons to balance the Fe(2+)-Fe(3+) ratio during magnetite formation. This is Magnetosome protein MamT (mamT) from Paramagnetospirillum magneticum (strain ATCC 700264 / AMB-1) (Magnetospirillum magneticum).